The sequence spans 1553 residues: MADNSPLIREERQRLFRPYTRAMLTAPSAQPAKENGKTEENKDNSRDKGRGANKDRDGSAHPDQALEQGSRLPARMRNIFPAELASTPLEDFDPFYKNKKTFVVVTKAGDIFRFSGEKSLWMLDPFTPIRRVAISTMVQPIFSYFIMITILIHCIFMIMPATQTTYILELVFLSIYTIEVVVKVLARGFILHPFAYLRDPWNWLDFLVTLIGYITLVVDLGHLYALRAFRVLRSWRTVTIVPGWRTIVDALSLSITSLKDLVLLLLFSLFVFAVLGLQIYMGVLTQKCVKHFPADGSWGNFTDERWFNYTSNSSHWYIPDDWIEYPLCGNSSGAGMCPPGYTCLQGYGGNPNYGYTSFDTFGWAFLSVFRLVTLDYWEDLYQLALRSAGPWHILFFIIVVFYGTFCFLNFILAVVVMSYTHMVKRADEEKAAERELKKEKKAASVANNTANGQEQTTIEMNGDEAVVIDNNDQAARQQSDPETPAPSVTQRLTDFLCVWDCCVPWQKLQGAIGAVVLSPFFELFIAVIIVLNITFMALDHHDMNIEFERILRTGNYIFTSIYIVEAVLKIIALSPKFYFKDSWNVFDFIIVVFAILELGLEGVQGLSVFRSFRLLRVFRLAKFWPTLNNFMSVMTKSYGAFVNVMYVMFLLLFIFAIIGMQLFGMNYIDNMERFPDGDLPRWNFTDFLHSFMIVFRALCGEWIESMWDCMLVGDWSCIPFFVAVFFVGNLVILNLLIALLLNNYGSFCTSPTSDEEDSKDEDALAQIVRIFKRFKPNLNAVKLSPMKPDSEDIVESQEIQGNNIADAEDVLAGEFPPDCCCNAFYKCFPSRPARDSSVQRMWSNIRRVCFLLAKNKYFQKFVTAVLVITSVLLALEDIYLPQRPVLVNITLYVDYVLTAFFVIEMIIMLFAVGFKKYFTSKWYWLDFIVVVAYLLNFVLMCAGIEALQTLRLLRVFRLFRPLSKVNGMQVVTSTLVEAVPHIFNVILVGIFFWLVFAIMGVQLFAGKFYKCVDENSTVLSHEITMDRNDCLHENYTWENSPMNFDHVGNAYLSLLQVATFKGWLQIMNDAIDSREVHKQPIRETNIYMYLYFIFFIVFGSFFILKLFVCILIDIFRQQRRKAEGLSATDSRTQLIYRRAVMRTMSAKPVKRIPKPTCHPQSLMYDISVNRKFEYTMMILIILNVAVMAIDHYGQSMEFSEVLDYLNLIFIIIFFVECVIKVSGLRHHYFKDPWNIIDFLYVVLAIAGLMLSDVIEKYFISPTLLRILRILRVGRLLRYFQSARGMRLLLLALRKALRTLFNVSFLLFVIMFVYAVFGMEFFMHIRDAGAIDDVYNFKTFGQSIILLFQLATSAGWDGVYFAIANEEDCRAPDHELGYPGNCGSRALGIAYLVSYLIITCLVVINMYAAVILDYVLEVYEDSKEGLTDDDYDMFFEVWQQFDPEATQYIRYDQLSELLEALQPPLQVQKPNKYKILSMNIPICKDDHIFYKDVLEALVKDVFSRRGSPVEAGDVQAPNVDEAEYKPVSSTLQRQREEYCVRLIQNAWRKHKQQN.

The tract at residues 1-68 is disordered; that stretch reads MADNSPLIRE…SAHPDQALEQ (68 aa). Residues 1 to 140 lie on the Cytoplasmic side of the membrane; it reads MADNSPLIRE…RVAISTMVQP (140 aa). Positions 34–60 are enriched in basic and acidic residues; the sequence is ENGKTEENKDNSRDKGRGANKDRDGSA. Residues 141–159 traverse the membrane as a helical segment; it reads IFSYFIMITILIHCIFMIM. The Extracellular portion of the chain corresponds to 160 to 165; the sequence is PATQTT. A helical membrane pass occupies residues 166–186; it reads YILELVFLSIYTIEVVVKVLA. Topologically, residues 187–200 are cytoplasmic; the sequence is RGFILHPFAYLRDP. The helical transmembrane segment at 201–218 threads the bilayer; that stretch reads WNWLDFLVTLIGYITLVV. Residues 219–224 are Extracellular-facing; that stretch reads DLGHLY. The helical transmembrane segment at 225–241 threads the bilayer; sequence ALRAFRVLRSWRTVTIV. Residues 242–260 are Cytoplasmic-facing; it reads PGWRTIVDALSLSITSLKD. Residues 261 to 280 traverse the membrane as a helical segment; that stretch reads LVLLLLFSLFVFAVLGLQIY. At 281-360 the chain is on the extracellular side; it reads MGVLTQKCVK…PNYGYTSFDT (80 aa). 2 cysteine pairs are disulfide-bonded: Cys-288–Cys-337 and Cys-328–Cys-343. 4 N-linked (GlcNAc...) asparagine glycosylation sites follow: Asn-300, Asn-308, Asn-312, and Asn-330. Positions 361–385 form an intramembrane region, pore-forming; that stretch reads FGWAFLSVFRLVTLDYWEDLYQLAL. Glu-378 is a binding site for saxitoxin. Residues 386–392 are Extracellular-facing; that stretch reads RSAGPWH. A helical membrane pass occupies residues 393–413; the sequence is ILFFIIVVFYGTFCFLNFILA. Over 414–519 the chain is Cytoplasmic; that stretch reads VVVMSYTHMV…GAIGAVVLSP (106 aa). A helical transmembrane segment spans residues 520-538; sequence FFELFIAVIIVLNITFMAL. Residues 539 to 549 lie on the Extracellular side of the membrane; that stretch reads DHHDMNIEFER. The helical transmembrane segment at 550 to 569 threads the bilayer; it reads ILRTGNYIFTSIYIVEAVLK. Over 570–583 the chain is Cytoplasmic; the sequence is IIALSPKFYFKDSW. The chain crosses the membrane as a helical span at residues 584-603; the sequence is NVFDFIIVVFAILELGLEGV. The Extracellular portion of the chain corresponds to 604-605; it reads QG. A helical membrane pass occupies residues 606 to 623; that stretch reads LSVFRSFRLLRVFRLAKF. Residues 624-639 lie on the Cytoplasmic side of the membrane; the sequence is WPTLNNFMSVMTKSYG. A helical membrane pass occupies residues 640 to 658; it reads AFVNVMYVMFLLLFIFAII. The Extracellular segment spans residues 659 to 686; the sequence is GMQLFGMNYIDNMERFPDGDLPRWNFTD. N-linked (GlcNAc...) asparagine glycosylation occurs at Asn-683. An intramembrane region (pore-forming) is located at residues 687-707; sequence FLHSFMIVFRALCGEWIESMW. The tetrodotoxin site is built by Glu-701 and Glu-704. Glu-704 lines the saxitoxin pocket. Topologically, residues 708 to 719 are extracellular; the sequence is DCMLVGDWSCIP. Cys-709 and Cys-717 are joined by a disulfide. A helical transmembrane segment spans residues 720 to 740; sequence FFVAVFFVGNLVILNLLIALL. At 741-857 the chain is on the cytoplasmic side; the sequence is LNNYGSFCTS…VCFLLAKNKY (117 aa). Residues 858-875 form a helical membrane-spanning segment; that stretch reads FQKFVTAVLVITSVLLAL. The Extracellular portion of the chain corresponds to 876-888; the sequence is EDIYLPQRPVLVN. A helical transmembrane segment spans residues 889-907; the sequence is ITLYVDYVLTAFFVIEMII. Residues 908 to 921 are Cytoplasmic-facing; sequence MLFAVGFKKYFTSK. Residues 922–940 traverse the membrane as a helical segment; that stretch reads WYWLDFIVVVAYLLNFVLM. The Extracellular segment spans residues 941 to 945; the sequence is CAGIE. Residues 946 to 964 traverse the membrane as a helical segment; sequence ALQTLRLLRVFRLFRPLSK. Topologically, residues 965 to 981 are cytoplasmic; sequence VNGMQVVTSTLVEAVPH. A helical membrane pass occupies residues 982–1001; that stretch reads IFNVILVGIFFWLVFAIMGV. Residues 1002-1047 lie on the Extracellular side of the membrane; that stretch reads QLFAGKFYKCVDENSTVLSHEITMDRNDCLHENYTWENSPMNFDHV. Cysteines 1011 and 1030 form a disulfide. The N-linked (GlcNAc...) asparagine glycan is linked to Asn-1015. The N-linked (GlcNAc...) asparagine; atypical glycan is linked to Asn-1028. An N-linked (GlcNAc...) asparagine glycan is attached at Asn-1034. Residues 1048 to 1069 constitute an intramembrane region (pore-forming); sequence GNAYLSLLQVATFKGWLQIMND. Residue Gly-1062 participates in tetrodotoxin binding. Trp-1063 serves as a coordination point for saxitoxin. Residues 1070-1086 are Extracellular-facing; that stretch reads AIDSREVHKQPIRETNI. A helical transmembrane segment spans residues 1087-1108; the sequence is YMYLYFIFFIVFGSFFILKLFV. Over 1109–1171 the chain is Cytoplasmic; that stretch reads CILIDIFRQQ…LMYDISVNRK (63 aa). Residues 1133–1146 form a linker region that may regulate channel inactivation region; the sequence is QLIYRRAVMRTMSA. The helical transmembrane segment at 1172-1189 threads the bilayer; it reads FEYTMMILIILNVAVMAI. Residues 1190–1200 lie on the Extracellular side of the membrane; it reads DHYGQSMEFSE. Residues 1201 to 1219 form a helical membrane-spanning segment; the sequence is VLDYLNLIFIIIFFVECVI. The Cytoplasmic portion of the chain corresponds to 1220–1231; the sequence is KVSGLRHHYFKD. The chain crosses the membrane as a helical span at residues 1232–1249; the sequence is PWNIIDFLYVVLAIAGLM. The Extracellular portion of the chain corresponds to 1250-1262; that stretch reads LSDVIEKYFISPT. A helical transmembrane segment spans residues 1263–1279; sequence LLRILRILRVGRLLRYF. The Cytoplasmic segment spans residues 1280–1298; that stretch reads QSARGMRLLLLALRKALRT. Residues 1299–1316 traverse the membrane as a helical segment; sequence LFNVSFLLFVIMFVYAVF. At 1317–1338 the chain is on the extracellular side; that stretch reads GMEFFMHIRDAGAIDDVYNFKT. The segment at residues 1339-1361 is an intramembrane region (pore-forming); the sequence is FGQSIILLFQLATSAGWDGVYFA. Residues Gly-1354 and Asp-1356 each contribute to the tetrodotoxin site. Asp-1356 provides a ligand contact to saxitoxin. At 1362–1387 the chain is on the extracellular side; that stretch reads IANEEDCRAPDHELGYPGNCGSRALG. An intrachain disulfide couples Cys-1368 to Cys-1381. The helical transmembrane segment at 1388–1410 threads the bilayer; the sequence is IAYLVSYLIITCLVVINMYAAVI. Topologically, residues 1411-1553 are cytoplasmic; it reads LDYVLEVYED…NAWRKHKQQN (143 aa).

It belongs to the sodium channel (TC 1.A.1.10) family. Detected in adult nerve cord, muscle, gut and mushroom-shaped accessory glands.

The protein resides in the cell membrane. Its activity is regulated as follows. Inhibited by the pore blockers saxitoxin and tetrodotoxin. In terms of biological role, mediates the voltage-dependent sodium ion permeability of excitable membranes. The chain is Sodium channel protein PaFPC1 from Periplaneta americana (American cockroach).